We begin with the raw amino-acid sequence, 671 residues long: UvrABC system protein C (671 aa).

The GIY-YIG domain occupies valine 16 to valine 95. Positions aspartate 208–alanine 243 constitute a UVR domain. The disordered stretch occupies residues serine 645–threonine 671.

The protein belongs to the UvrC family. Interacts with UvrB in an incision complex.

It is found in the cytoplasm. The UvrABC repair system catalyzes the recognition and processing of DNA lesions. UvrC both incises the 5' and 3' sides of the lesion. The N-terminal half is responsible for the 3' incision and the C-terminal half is responsible for the 5' incision. This is UvrABC system protein C from Mycobacteroides abscessus (strain ATCC 19977 / DSM 44196 / CCUG 20993 / CIP 104536 / JCM 13569 / NCTC 13031 / TMC 1543 / L948) (Mycobacterium abscessus).